We begin with the raw amino-acid sequence, 477 residues long: Endoglucanase A (477 aa).

The first 32 residues, 1 to 32 (MKNVKKRVGVVLLILAVLGVYMLAMPANTVSA), serve as a signal peptide directing secretion. E95 functions as the Proton donor in the catalytic mechanism. D152 acts as the Nucleophile in catalysis. The Dockerin domain occupies 411–477 (PQVVYGDVNG…LIKSIPHLPY (67 aa)).

Belongs to the glycosyl hydrolase 8 (cellulase D) family.

It carries out the reaction Endohydrolysis of (1-&gt;4)-beta-D-glucosidic linkages in cellulose, lichenin and cereal beta-D-glucans.. Its function is as follows. This enzyme catalyzes the endohydrolysis of 1,4-beta-glucosidic linkages in cellulose, lichenin and cereal beta-D-glucans. The protein is Endoglucanase A (celA) of Acetivibrio thermocellus (strain ATCC 27405 / DSM 1237 / JCM 9322 / NBRC 103400 / NCIMB 10682 / NRRL B-4536 / VPI 7372) (Clostridium thermocellum).